We begin with the raw amino-acid sequence, 235 residues long: H2HPP isomerase (235 aa).

2 consecutive Cupin type-2 domains span residues 41 to 106 (VPPH…AIDI) and 151 to 216 (KIPG…KSIN). A divalent metal cation-binding residues include His50, His52, Gln56, His91, His162, His164, Gln168, and His202. A substrate-binding site is contributed by Tyr223.

Monomer. Fe(2+) serves as cofactor. It depends on Co(2+) as a cofactor.

The protein resides in the cytoplasm. It catalyses the reaction 3-[(4R)-4-hydroxycyclohexa-1,5-dien-1-yl]-2-oxopropanoate = 3-[(1E,4R)-4-hydroxycyclohex-2-en-1-ylidene]pyruvate. It participates in antibiotic biosynthesis; bacilysin biosynthesis. In terms of biological role, part of the bacABCDEF operon responsible for the biosynthesis of the nonribosomally synthesized dipeptide antibiotic bacilysin, composed of L-alanine and L-anticapsin. Bacilysin is an irreversible inactivator of the glutaminase domain of glucosamine synthetase. BacB catalyzes the allylic isomerization of the endocyclic-delta(4),delta(8)-7R-dihydro-hydroxyphenylpyruvate (en-H2HPP) to generate a mixture of 3E,7R- and 3Z, 7R-olefins (E/Z ration of 3/1) of the exocyclic-delta(3),delta(5)-dihydro-hydroxyphenylpyruvate (ex-H2HPP). The sequence is that of H2HPP isomerase from Bacillus subtilis (strain 168).